We begin with the raw amino-acid sequence, 216 residues long: ATP-dependent Clp protease proteolytic subunit (216 aa).

The Nucleophile role is filled by serine 120. Residue histidine 145 is part of the active site.

This sequence belongs to the peptidase S14 family. As to quaternary structure, fourteen ClpP subunits assemble into 2 heptameric rings which stack back to back to give a disk-like structure with a central cavity, resembling the structure of eukaryotic proteasomes.

The protein resides in the cytoplasm. The enzyme catalyses Hydrolysis of proteins to small peptides in the presence of ATP and magnesium. alpha-casein is the usual test substrate. In the absence of ATP, only oligopeptides shorter than five residues are hydrolyzed (such as succinyl-Leu-Tyr-|-NHMec, and Leu-Tyr-Leu-|-Tyr-Trp, in which cleavage of the -Tyr-|-Leu- and -Tyr-|-Trp bonds also occurs).. Its function is as follows. Cleaves peptides in various proteins in a process that requires ATP hydrolysis. Has a chymotrypsin-like activity. Plays a major role in the degradation of misfolded proteins. The protein is ATP-dependent Clp protease proteolytic subunit of Cupriavidus metallidurans (strain ATCC 43123 / DSM 2839 / NBRC 102507 / CH34) (Ralstonia metallidurans).